The primary structure comprises 188 residues: MHNQKKNQGFSVKSVVATGIGAAVFFVLMKFIAIPTGVPNTTINVAEGWLALIAGLFGPVVGLLVGLIGHTLNDAVTYGAPWWSWVIADGVFGLLLGFGKKYLALEYGELTTKKLVQFNVWQAVSNVLVWVIIAPLGDIIIYKEAAQKVFLQGAVTTVVNTISVAIIGSLLLVAYVKSRPKKSSLRSE.

Transmembrane regions (helical) follow at residues 15 to 35 (VVATGIGAAVFFVLMKFIAIP), 48 to 68 (GWLALIAGLFGPVVGLLVGLI), 79 to 99 (GAPWWSWVIADGVFGLLLGFG), 121 to 141 (WQAVSNVLVWVIIAPLGDIII), and 154 to 174 (AVTTVVNTISVAIIGSLLLVA).

This sequence belongs to the UPF0397 family.

It localises to the cell membrane. In Leuconostoc citreum (strain KM20), this protein is UPF0397 protein LCK_00164.